A 459-amino-acid chain; its full sequence is Phosphoglucosamine mutase (459 aa).

Ser-106 (phosphoserine intermediate) is an active-site residue. Positions 106, 247, 249, and 251 each coordinate Mg(2+). A Phosphoserine modification is found at Ser-106.

Belongs to the phosphohexose mutase family. It depends on Mg(2+) as a cofactor. In terms of processing, activated by phosphorylation.

The enzyme catalyses alpha-D-glucosamine 1-phosphate = D-glucosamine 6-phosphate. Catalyzes the conversion of glucosamine-6-phosphate to glucosamine-1-phosphate. This is Phosphoglucosamine mutase from Chlamydia muridarum (strain MoPn / Nigg).